A 376-amino-acid chain; its full sequence is Copper-containing nitrite reductase (376 aa).

A signal peptide (tat-type signal) is located at residues M1 to A33. 2 Plastocyanin-like domains span residues M98–L193 and G258–T359. Cu cation is bound by residues H131, H136, H171, C172, H181, M186, and H342.

It belongs to the multicopper oxidase family. As to quaternary structure, homotrimer. The cofactor is Cu(2+). Requires Cu(+) as cofactor. It depends on FAD as a cofactor. Post-translationally, predicted to be exported by the Tat system. The position of the signal peptide cleavage has not been experimentally proven.

It is found in the periplasm. It catalyses the reaction nitric oxide + Fe(III)-[cytochrome c] + H2O = Fe(II)-[cytochrome c] + nitrite + 2 H(+). Its pathway is nitrogen metabolism; nitrate reduction (denitrification); dinitrogen from nitrate: step 2/4. The chain is Copper-containing nitrite reductase (nirK) from Rhizobium meliloti (strain 1021) (Ensifer meliloti).